Reading from the N-terminus, the 118-residue chain is Ribosome-binding factor A (118 aa).

It belongs to the RbfA family. As to quaternary structure, monomer. Binds 30S ribosomal subunits, but not 50S ribosomal subunits or 70S ribosomes.

Its subcellular location is the cytoplasm. In terms of biological role, one of several proteins that assist in the late maturation steps of the functional core of the 30S ribosomal subunit. Associates with free 30S ribosomal subunits (but not with 30S subunits that are part of 70S ribosomes or polysomes). Required for efficient processing of 16S rRNA. May interact with the 5'-terminal helix region of 16S rRNA. The sequence is that of Ribosome-binding factor A from Dehalococcoides mccartyi (strain ATCC BAA-2100 / JCM 16839 / KCTC 5957 / BAV1).